We begin with the raw amino-acid sequence, 284 residues long: Bifunctional protein FolD (284 aa).

NADP(+) contacts are provided by residues 166–168 (GAS) and Ile-232.

Belongs to the tetrahydrofolate dehydrogenase/cyclohydrolase family. Homodimer.

The enzyme catalyses (6R)-5,10-methylene-5,6,7,8-tetrahydrofolate + NADP(+) = (6R)-5,10-methenyltetrahydrofolate + NADPH. It catalyses the reaction (6R)-5,10-methenyltetrahydrofolate + H2O = (6R)-10-formyltetrahydrofolate + H(+). The protein operates within one-carbon metabolism; tetrahydrofolate interconversion. Its function is as follows. Catalyzes the oxidation of 5,10-methylenetetrahydrofolate to 5,10-methenyltetrahydrofolate and then the hydrolysis of 5,10-methenyltetrahydrofolate to 10-formyltetrahydrofolate. The protein is Bifunctional protein FolD of Pseudomonas paraeruginosa (strain DSM 24068 / PA7) (Pseudomonas aeruginosa (strain PA7)).